The sequence spans 366 residues: MWLEKIDIQHFRNYSEASVSFSPHLNIFLGRNAQGKTNILEAIYFLALTRSHRTHLDKELIQFQQNSLKLNGIVHRHSGNLPLEINLSNKGRVTKVNYLKQAKLSDYIGHMTVVLFAPEDLQLVKGSPSLRRKFIDIDLGQIKPVYLSDLSNYNHVLKQRNAYLKSTDKVDINFLSVLDEQLADFGARVIKHRLEFIKQLEEEADGHHSILSNQIERLKISYESNIPIQNSKDIREAFLTTLNQNHKRDIFKKNTGVGPHRDDLKFYINDMNASFGSQGQQRSLILSLKMAEIALIKKVTEEFPILLLDDVMSELDNHRQLKLLESIDEEVQTFMTTTSLDHLSNLPPNLKTFLVKNGTIYEKQVD.

Position 30-37 (30-37 (GRNAQGKT)) interacts with ATP.

It belongs to the RecF family.

It localises to the cytoplasm. The RecF protein is involved in DNA metabolism; it is required for DNA replication and normal SOS inducibility. RecF binds preferentially to single-stranded, linear DNA. It also seems to bind ATP. This chain is DNA replication and repair protein RecF, found in Streptococcus thermophilus (strain CNRZ 1066).